A 184-amino-acid chain; its full sequence is Ribosome-recycling factor (184 aa).

This sequence belongs to the RRF family.

It is found in the cytoplasm. In terms of biological role, responsible for the release of ribosomes from messenger RNA at the termination of protein biosynthesis. May increase the efficiency of translation by recycling ribosomes from one round of translation to another. The sequence is that of Ribosome-recycling factor from Acinetobacter baumannii (strain AB307-0294).